Consider the following 461-residue polypeptide: Glycine--tRNA ligase (461 aa).

Residues arginine 100 and glutamate 163 each coordinate substrate. ATP contacts are provided by residues arginine 195–glutamate 197, phenylalanine 205–phenylalanine 210, glutamate 282–leucine 283, and glycine 326–arginine 329. Phenylalanine 210–glutamate 214 contributes to the substrate binding site. Glutamate 322 to glycine 326 lines the substrate pocket.

This sequence belongs to the class-II aminoacyl-tRNA synthetase family. In terms of assembly, homodimer.

It localises to the cytoplasm. The enzyme catalyses tRNA(Gly) + glycine + ATP = glycyl-tRNA(Gly) + AMP + diphosphate. Its function is as follows. Catalyzes the attachment of glycine to tRNA(Gly). The sequence is that of Glycine--tRNA ligase from Corynebacterium efficiens (strain DSM 44549 / YS-314 / AJ 12310 / JCM 11189 / NBRC 100395).